The sequence spans 216 residues: MADLFSGLVGGVVGAVAAADLPAEGERAPRPAPGTAWTCCCSKLQEGARELEGFVQQLSFVAGKLACCLRVGAEQLARCAAEGRLPSSSSSSSCCALLQLEKQDLEQSLEAGKQGAECLLRSSKLALEALLEGARVAATRGLLLVESSKDTVLRSIPHTQEKLAQAYSSFLRGYQGAAAGRSLGYGAPAAAYGQQQQPSSYGAPPASSQQPSGFFW.

The interval 194–216 is disordered; that stretch reads QQQQPSSYGAPPASSQQPSGFFW.

This is Sporozoite antigen from Eimeria tenella (Coccidian parasite).